The sequence spans 1755 residues: Transposon Ty1-ML1 Gag-Pol polyprotein (1755 aa).

Composition is skewed to polar residues over residues 1–23 (MESQQLSNYPNISHGSACASVTS), 48–60 (TKANSQQTTTPAS), and 127–152 (QSQFPQYPSSVGTPLSTPSPESGNTF). Disordered regions lie at residues 1–88 (MESQ…YPQQ), 126–173 (PQSQ…RPPP), and 352–421 (GSRN…SKST). A compositionally biased stretch (low complexity) spans 153-165 (TDSSSADSDMTST). The RNA-binding stretch occupies residues 299 to 401 (NNGIHINNKV…NSKSKTARAH (103 aa)). Over residues 402–418 (NVSTSNNSPSTDNDSIS) the composition is skewed to low complexity. Asp-461 acts as the For protease activity; shared with dimeric partner in catalysis. The tract at residues 583 to 640 (NVHTSESTRKYPYPFIHRMLAHANAQTIRYSLKNNTITYFNESDVDWSSAIDYQCPDC) is integrase-type zinc finger-like. The Integrase catalytic domain occupies 660 to 835 (NSYEPFQYLH…AGLDISTLLP (176 aa)). The Mg(2+) site is built by Asp-671 and Asp-736. 3 disordered regions span residues 956-1087 (SKAV…ETEK), 1092-1111 (RSPSIDASPPENNSSHNIVP), and 1130-1171 (DLPL…DSNA). The segment covering 960 to 969 (SPTDSTPPST) has biased composition (low complexity). Over residues 1005–1015 (STPQISNIEST) the composition is skewed to polar residues. The span at 1038–1053 (ESSHASKSKDFRHSDS) shows a compositional bias: basic and acidic residues. Polar residues-rich tracts occupy residues 1054-1082 (YSENETNHTNVPISSTGGTNNKTVPQISD) and 1101-1111 (PENNSSHNIVP). Residues 1178–1212 (KKRSLEDNETEIKVSRDTWNTKNMRSLEPPRSKKR) carry the Bipartite nuclear localization signal motif. The region spanning 1338 to 1476 (NNYYITQLDI…DILGLEIKYQ (139 aa)) is the Reverse transcriptase Ty1/copia-type domain. Mg(2+) is bound by residues Asp-1346, Asp-1427, Asp-1428, Asp-1610, Glu-1652, and Asp-1685. The RNase H Ty1/copia-type domain occupies 1610 to 1752 (DASYGNQPYY…IKTFKLLTNK (143 aa)).

The capsid protein forms a homotrimer, from which the VLPs are assembled. The protease is a homodimer, whose active site consists of two apposed aspartic acid residues. Post-translationally, initially, virus-like particles (VLPs) are composed of the structural unprocessed proteins Gag and Gag-Pol, and also contain the host initiator methionine tRNA (tRNA(i)-Met) which serves as a primer for minus-strand DNA synthesis, and a dimer of genomic Ty RNA. Processing of the polyproteins occurs within the particle and proceeds by an ordered pathway, called maturation. First, the protease (PR) is released by autocatalytic cleavage of the Gag-Pol polyprotein yielding capsid protein p45 and a Pol-p154 precursor protein. This cleavage is a prerequisite for subsequent processing of Pol-p154 at the remaining sites to release the mature structural and catalytic proteins. Maturation takes place prior to the RT reaction and is required to produce transposition-competent VLPs.

Its subcellular location is the cytoplasm. It localises to the nucleus. It catalyses the reaction DNA(n) + a 2'-deoxyribonucleoside 5'-triphosphate = DNA(n+1) + diphosphate. The catalysed reaction is Endonucleolytic cleavage to 5'-phosphomonoester.. Its function is as follows. Capsid protein (CA) is the structural component of the virus-like particle (VLP), forming the shell that encapsulates the retrotransposons dimeric RNA genome. The particles are assembled from trimer-clustered units and there are holes in the capsid shells that allow for the diffusion of macromolecules. CA also has nucleocapsid-like chaperone activity, promoting primer tRNA(i)-Met annealing to the multipartite primer-binding site (PBS), dimerization of Ty1 RNA and initiation of reverse transcription. In terms of biological role, the aspartyl protease (PR) mediates the proteolytic cleavages of the Gag and Gag-Pol polyproteins after assembly of the VLP. Functionally, reverse transcriptase/ribonuclease H (RT) is a multifunctional enzyme that catalyzes the conversion of the retro-elements RNA genome into dsDNA within the VLP. The enzyme displays a DNA polymerase activity that can copy either DNA or RNA templates, and a ribonuclease H (RNase H) activity that cleaves the RNA strand of RNA-DNA heteroduplexes during plus-strand synthesis and hydrolyzes RNA primers. The conversion leads to a linear dsDNA copy of the retrotransposon that includes long terminal repeats (LTRs) at both ends. Integrase (IN) targets the VLP to the nucleus, where a subparticle preintegration complex (PIC) containing at least integrase and the newly synthesized dsDNA copy of the retrotransposon must transit the nuclear membrane. Once in the nucleus, integrase performs the integration of the dsDNA into the host genome. This chain is Transposon Ty1-ML1 Gag-Pol polyprotein (TY1B-ML1), found in Saccharomyces cerevisiae (strain ATCC 204508 / S288c) (Baker's yeast).